A 628-amino-acid chain; its full sequence is Biosynthetic arginine decarboxylase (628 aa).

K99 is modified (N6-(pyridoxal phosphate)lysine). Residue 279-289 (VDVGGGLGIDY) participates in substrate binding.

The protein belongs to the Orn/Lys/Arg decarboxylase class-II family. SpeA subfamily. It depends on Mg(2+) as a cofactor. Requires pyridoxal 5'-phosphate as cofactor.

It catalyses the reaction L-arginine + H(+) = agmatine + CO2. Its pathway is amine and polyamine biosynthesis; agmatine biosynthesis; agmatine from L-arginine: step 1/1. Catalyzes the biosynthesis of agmatine from arginine. In Xylella fastidiosa (strain M12), this protein is Biosynthetic arginine decarboxylase.